We begin with the raw amino-acid sequence, 203 residues long: Acireductone dioxygenase 3 (203 aa).

Histidine 96, histidine 98, glutamate 102, and histidine 141 together coordinate Fe(2+). The Ni(2+) site is built by histidine 96, histidine 98, glutamate 102, and histidine 141.

The protein belongs to the acireductone dioxygenase (ARD) family. Fe(2+) serves as cofactor. It depends on Ni(2+) as a cofactor.

It is found in the cytoplasm. The protein resides in the nucleus. It catalyses the reaction 1,2-dihydroxy-5-(methylsulfanyl)pent-1-en-3-one + O2 = 4-methylsulfanyl-2-oxobutanoate + formate + 2 H(+). The catalysed reaction is 1,2-dihydroxy-5-(methylsulfanyl)pent-1-en-3-one + O2 = 3-(methylsulfanyl)propanoate + CO + formate + 2 H(+). Its pathway is amino-acid biosynthesis; L-methionine biosynthesis via salvage pathway; L-methionine from S-methyl-5-thio-alpha-D-ribose 1-phosphate: step 5/6. Functionally, catalyzes 2 different reactions between oxygen and the acireductone 1,2-dihydroxy-3-keto-5-methylthiopentene (DHK-MTPene) depending upon the metal bound in the active site. Fe-containing acireductone dioxygenase (Fe-ARD) produces formate and 2-keto-4-methylthiobutyrate (KMTB), the alpha-ketoacid precursor of methionine in the methionine recycle pathway. Ni-containing acireductone dioxygenase (Ni-ARD) produces methylthiopropionate, carbon monoxide and formate, and does not lie on the methionine recycle pathway. The polypeptide is Acireductone dioxygenase 3 (Physcomitrium patens (Spreading-leaved earth moss)).